We begin with the raw amino-acid sequence, 522 residues long: Glutamate--cysteine ligase (522 aa).

It belongs to the glutamate--cysteine ligase type 1 family. Type 1 subfamily.

The enzyme catalyses L-cysteine + L-glutamate + ATP = gamma-L-glutamyl-L-cysteine + ADP + phosphate + H(+). It functions in the pathway sulfur metabolism; glutathione biosynthesis; glutathione from L-cysteine and L-glutamate: step 1/2. This is Glutamate--cysteine ligase from Shewanella pealeana (strain ATCC 700345 / ANG-SQ1).